The sequence spans 729 residues: Putative cyclic nucleotide-gated ion channel 19 (729 aa).

At Met1–Val172 the chain is on the cytoplasmic side. The segment at Ser52–Pro82 is disordered. Over residues Pro67–Val81 the composition is skewed to low complexity. Residues Leu173–Ile193 form a helical membrane-spanning segment. Residues Gln194 to Lys208 lie on the Extracellular side of the membrane. A helical transmembrane segment spans residues Val209 to Phe229. The Cytoplasmic portion of the chain corresponds to Arg230 to Lys261. Residues Phe262–Pro282 form a helical membrane-spanning segment. Topologically, residues Leu283 to Gln295 are extracellular. Residues Ile296–Leu316 traverse the membrane as a helical segment. Over Ala317 to Asn332 the chain is Cytoplasmic. Residues Phe333 to Leu353 traverse the membrane as a helical segment. The Extracellular segment spans residues Ser354 to Ser451. The chain crosses the membrane as a helical span at residues Tyr452–Ala472. Over Arg473–Arg729 the chain is Cytoplasmic. Residues Ile560 to Leu677 and Glu625 each bind a nucleoside 3',5'-cyclic phosphate. The interval Phe678 to Glu694 is calmodulin-binding. An IQ domain is found at Arg699–Asn728.

Belongs to the cyclic nucleotide-gated cation channel (TC 1.A.1.5) family. Homotetramer or heterotetramer.

The protein resides in the cell membrane. In terms of biological role, putative cyclic nucleotide-gated ion channel. This is Putative cyclic nucleotide-gated ion channel 19 (CNGC19) from Arabidopsis thaliana (Mouse-ear cress).